Consider the following 433-residue polypeptide: 26S proteasome regulatory subunit 7 (433 aa).

The segment at 1–23 is disordered; it reads MPDYLGADQRKTKEEEKEDKPIR. Positions 8 to 23 are enriched in basic and acidic residues; the sequence is DQRKTKEEEKEDKPIR. 216 to 223 contacts ATP; sequence GPPGTGKT.

The protein belongs to the AAA ATPase family. Phosphorylated. Dephosphorylated by ublcp1 which impairs psmc2 ATPase activity and disrupts 26S proteasome assembly.

It localises to the cytoplasm. It is found in the nucleus. The 26S proteasome is involved in the ATP-dependent degradation of ubiquitinated proteins. The regulatory (or ATPase) complex confers ATP dependency and substrate specificity to the 26S complex. The polypeptide is 26S proteasome regulatory subunit 7 (psmc2) (Xenopus laevis (African clawed frog)).